Reading from the N-terminus, the 800-residue chain is Nucleolar complex protein 3 homolog (800 aa).

Disordered stretches follow at residues 27 to 93 and 160 to 187; these read KLKN…DMMD and GIIP…RELE. A compositionally biased stretch (basic residues) spans 40–51; that stretch reads KKYRKEQRKLRQ. Residues 66–78 show a composition bias toward basic and acidic residues; the sequence is NPKEKRPGKRIER. Acidic residues predominate over residues 79–93; sequence EEEEEEEALPLDMMD. Residues 160 to 174 show a composition bias toward basic and acidic residues; the sequence is GIIPQTREKPVTDSN. The segment covering 175–187 has biased composition (acidic residues); the sequence is KDEEDQEEERELE. A Glycyl lysine isopeptide (Lys-Gly) (interchain with G-Cter in SUMO2) cross-link involves residue lysine 333. Residues 451-490 are a coiled coil; that stretch reads KEKRKSLSRMQRKWKKAEEKLERELREAEASESTEKKLKL. Phosphoserine is present on serine 787.

The protein belongs to the CBF/MAK21 family. Expressed in colon, heart, kidney, liver, lung, placenta, skeletal muscle, small intestine, spleen and thymus.

It localises to the nucleus. The protein localises to the nucleolus. Its subcellular location is the nucleus speckle. May be required for adipogenesis. The chain is Nucleolar complex protein 3 homolog (NOC3L) from Homo sapiens (Human).